The chain runs to 218 residues: Peptide methionine sulfoxide reductase MsrA (218 aa).

Residue cysteine 57 is part of the active site.

It belongs to the MsrA Met sulfoxide reductase family.

It carries out the reaction L-methionyl-[protein] + [thioredoxin]-disulfide + H2O = L-methionyl-(S)-S-oxide-[protein] + [thioredoxin]-dithiol. It catalyses the reaction [thioredoxin]-disulfide + L-methionine + H2O = L-methionine (S)-S-oxide + [thioredoxin]-dithiol. Functionally, has an important function as a repair enzyme for proteins that have been inactivated by oxidation. Catalyzes the reversible oxidation-reduction of methionine sulfoxide in proteins to methionine. In Brucella melitensis biotype 2 (strain ATCC 23457), this protein is Peptide methionine sulfoxide reductase MsrA.